Consider the following 168-residue polypeptide: Heat shock protein beta-9 (168 aa).

The segment covering 1–12 (MQRVGSSFSTGQ) has biased composition (polar residues). Disordered regions lie at residues 1–25 (MQRV…SRCP), 83–104 (TGQR…EQSV), and 129–168 (LWLR…VKNP). Positions 38–151 (LPVRLLRDEV…EAQTGQSQKP (114 aa)) constitute a sHSP domain. Over residues 86–104 (RQHESNDPSRGRYRMEQSV) the composition is skewed to basic and acidic residues. A compositionally biased stretch (polar residues) spans 158 to 168 (SSLQNESVKNP).

This sequence belongs to the small heat shock protein (HSP20) family. In terms of tissue distribution, testis specific.

The protein resides in the cytoplasm. It localises to the nucleus. In Mus musculus (Mouse), this protein is Heat shock protein beta-9 (Hspb9).